The sequence spans 612 residues: Bile salt-activated lipase (612 aa).

The first 20 residues, 1–20 (MGRLEVLFLGLTCCLAAACA), serve as a signal peptide directing secretion. Cys84 and Cys100 are oxidised to a cystine. Asn207 is a glycosylation site (N-linked (GlcNAc...) asparagine). The active-site Acyl-ester intermediate is the Ser214. An intrachain disulfide couples Cys266 to Cys277. Catalysis depends on charge relay system residues Asp340 and His455. Residues 553-612 (VGDHTPPEDDSEAAPVPPTDDSQGGPVPPTDDSQTTPVPPTDNSQAGDSVEAQMPGPIGF) form a disordered region. 4 repeat units span residues 556 to 566 (HTPPEDDSEAA), 567 to 577 (PVPPTDDSQGG), 578 to 588 (PVPPTDDSQTT), and 589 to 599 (PVPPTDNSQAG). Residues 556–599 (HTPPEDDSEAAPVPPTDDSQGGPVPPTDDSQTTPVPPTDNSQAG) form a 4 X 11 AA tandem repeats, O-glycosylated region region. The span at 583–599 (DDSQTTPVPPTDNSQAG) shows a compositional bias: polar residues.

The protein belongs to the type-B carboxylesterase/lipase family. As to quaternary structure, interacts with CLC. As to expression, synthesized primarily in the pancreas and then transported to the intestine.

The protein localises to the secreted. It catalyses the reaction a triacylglycerol + H2O = a diacylglycerol + a fatty acid + H(+). It carries out the reaction 1,2,3-tri-(9Z-octadecenoyl)-glycerol + H2O = di-(9Z)-octadecenoylglycerol + (9Z)-octadecenoate + H(+). The catalysed reaction is 1,2,3-trioctanoylglycerol + H2O = dioctanoylglycerol + octanoate + H(+). The enzyme catalyses a sterol ester + H2O = a sterol + a fatty acid + H(+). It catalyses the reaction cholesteryl (9Z-octadecenoate) + H2O = cholesterol + (9Z)-octadecenoate + H(+). It carries out the reaction an acetyl ester + H2O = an aliphatic alcohol + acetate + H(+). The catalysed reaction is a butanoate ester + H2O = an aliphatic alcohol + butanoate + H(+). The enzyme catalyses 9-hexadecanoyloxy-octadecanoate + H2O = 9-hydroxy-octadecanoate + hexadecanoate + H(+). It catalyses the reaction 9-(9Z-octadecenoyloxy)-octadecanoate + H2O = 9-hydroxy-octadecanoate + (9Z)-octadecenoate + H(+). It carries out the reaction 1-hexadecanoyl-sn-glycero-3-phosphocholine + H2O = sn-glycerol 3-phosphocholine + hexadecanoate + H(+). The catalysed reaction is 12-hexadecanoyloxy-octadecanoate + H2O = 12-hydroxyoctadecanoate + hexadecanoate + H(+). The enzyme catalyses 12-(9Z-octadecenoyloxy)-octadecanoate + H2O = 12-hydroxyoctadecanoate + (9Z)-octadecenoate + H(+). It catalyses the reaction 13-(9Z-octadecenoyloxy)-octadecanoate + H2O = 13-hydroxy-octadecanoate + (9Z)-octadecenoate + H(+). It carries out the reaction 9-(9Z-hexadecenoyloxy)-octadecanoate + H2O = (9Z)-hexadecenoate + 9-hydroxy-octadecanoate + H(+). The catalysed reaction is 12-(9Z-hexadecenoyloxy)-octadecanoate + H2O = 12-hydroxyoctadecanoate + (9Z)-hexadecenoate + H(+). The enzyme catalyses 13-(9Z-hexadecenoyloxy)-octadecanoate + H2O = 13-hydroxy-octadecanoate + (9Z)-hexadecenoate + H(+). It catalyses the reaction 12-octadecanoyloxy-octadecanoate + H2O = 12-hydroxyoctadecanoate + octadecanoate + H(+). It carries out the reaction 13-octadecanoyloxy-octadecanoate + H2O = 13-hydroxy-octadecanoate + octadecanoate + H(+). The catalysed reaction is 5-(9Z-hexadecenoyloxy)-octadecanoate + H2O = 5-hydroxy-octadecanoate + (9Z)-hexadecenoate + H(+). The enzyme catalyses 9-octadecanoyloxy-octadecanoate + H2O = 9-hydroxy-octadecanoate + octadecanoate + H(+). Activated by bile salts such as sodium taurocholate. Functionally, catalyzes the hydrolysis of a wide range of substrates including cholesteryl esters, phospholipids, lysophospholipids, di- and tri-acylglycerols, and fatty acid esters of hydroxy fatty acids (FAHFA). Preferentially hydrolyzes FAHFAs with the ester bond further away from the carboxylate. Unsaturated FAHFAs are hydrolyzed more quickly than saturated FAHFAs. Has an essential role in the complete digestion of dietary lipids and their intestinal absorption, along with the absorption of fat-soluble vitamins. This Rattus norvegicus (Rat) protein is Bile salt-activated lipase (Cel).